A 185-amino-acid polypeptide reads, in one-letter code: Ribosome-recycling factor (185 aa).

This sequence belongs to the RRF family.

The protein localises to the cytoplasm. Responsible for the release of ribosomes from messenger RNA at the termination of protein biosynthesis. May increase the efficiency of translation by recycling ribosomes from one round of translation to another. This chain is Ribosome-recycling factor, found in Dehalococcoides mccartyi (strain CBDB1).